A 193-amino-acid polypeptide reads, in one-letter code: Putative manganese efflux pump MntP (193 aa).

6 helical membrane passes run 3-23, 41-61, 65-85, 106-126, 133-153, and 169-189; these read MYATLILALALSMDAFAASIC, LIFGLAEACTPLIGWSLGLYA, IIEWDHWVAFTLLFILGCRMI, IVLITTAIATSLDAMAIGIGL, IVHTAMAIGMMTMIMATLGML, and IGGLILIAIGFNILFEHLELF.

It belongs to the MntP (TC 9.B.29) family.

It is found in the cell inner membrane. In terms of biological role, probably functions as a manganese efflux pump. This is Putative manganese efflux pump MntP from Photorhabdus laumondii subsp. laumondii (strain DSM 15139 / CIP 105565 / TT01) (Photorhabdus luminescens subsp. laumondii).